The sequence spans 213 residues: Uracil phosphoribosyltransferase (213 aa).

5-phospho-alpha-D-ribose 1-diphosphate contacts are provided by residues Arg-78, Arg-103, and 131 to 139; that span reads DPMLATGGT. Uracil-binding positions include Ile-197 and 202–204; that span reads GDA. Asp-203 contacts 5-phospho-alpha-D-ribose 1-diphosphate.

The protein belongs to the UPRTase family. Requires Mg(2+) as cofactor.

The catalysed reaction is UMP + diphosphate = 5-phospho-alpha-D-ribose 1-diphosphate + uracil. Its pathway is pyrimidine metabolism; UMP biosynthesis via salvage pathway; UMP from uracil: step 1/1. Its activity is regulated as follows. Allosterically activated by GTP. In terms of biological role, catalyzes the conversion of uracil and 5-phospho-alpha-D-ribose 1-diphosphate (PRPP) to UMP and diphosphate. In Bifidobacterium adolescentis (strain ATCC 15703 / DSM 20083 / NCTC 11814 / E194a), this protein is Uracil phosphoribosyltransferase.